Here is a 94-residue protein sequence, read N- to C-terminus: ESAT-6-like protein EsxI (94 aa).

This sequence belongs to the WXG100 family. ESAT-6 subfamily.

Its subcellular location is the secreted. In Mycobacterium tuberculosis (strain CDC 1551 / Oshkosh), this protein is ESAT-6-like protein EsxI.